The primary structure comprises 361 residues: Ferredoxin--NADP reductase 1 (361 aa).

FAD contacts are provided by Asp44, Gln52, Tyr57, Ala97, Phe142, Asp308, and Ser349.

It belongs to the ferredoxin--NADP reductase type 2 family. As to quaternary structure, homodimer. The cofactor is FAD.

It carries out the reaction 2 reduced [2Fe-2S]-[ferredoxin] + NADP(+) + H(+) = 2 oxidized [2Fe-2S]-[ferredoxin] + NADPH. The polypeptide is Ferredoxin--NADP reductase 1 (Cupriavidus necator (strain ATCC 17699 / DSM 428 / KCTC 22496 / NCIMB 10442 / H16 / Stanier 337) (Ralstonia eutropha)).